A 201-amino-acid chain; its full sequence is Large ribosomal subunit protein uL4 (201 aa).

Residues 42–67 are disordered; it reads GNSAQKTRSEVSGGGKKPWNQKGTGR.

This sequence belongs to the universal ribosomal protein uL4 family. As to quaternary structure, part of the 50S ribosomal subunit.

In terms of biological role, one of the primary rRNA binding proteins, this protein initially binds near the 5'-end of the 23S rRNA. It is important during the early stages of 50S assembly. It makes multiple contacts with different domains of the 23S rRNA in the assembled 50S subunit and ribosome. Its function is as follows. Forms part of the polypeptide exit tunnel. The polypeptide is Large ribosomal subunit protein uL4 (Legionella pneumophila (strain Paris)).